Here is a 556-residue protein sequence, read N- to C-terminus: ATP synthase subunit alpha 2 (556 aa).

An ATP-binding site is contributed by 177-184; sequence GDRATGKT. Residues 514-556 form a disordered region; the sequence is GGHAEDAADDMGGALDGEHASGDATSIAPTPPGGAEAGAPRKR. Residues 546 to 556 are compositionally biased toward low complexity; it reads GGAEAGAPRKR.

The protein belongs to the ATPase alpha/beta chains family. F-type ATPases have 2 components, CF(1) - the catalytic core - and CF(0) - the membrane proton channel. CF(1) has five subunits: alpha(3), beta(3), gamma(1), delta(1), epsilon(1). CF(0) has three main subunits: a(1), b(2) and c(9-12). The alpha and beta chains form an alternating ring which encloses part of the gamma chain. CF(1) is attached to CF(0) by a central stalk formed by the gamma and epsilon chains, while a peripheral stalk is formed by the delta and b chains.

Its subcellular location is the cell inner membrane. The catalysed reaction is ATP + H2O + 4 H(+)(in) = ADP + phosphate + 5 H(+)(out). Its function is as follows. Produces ATP from ADP in the presence of a proton gradient across the membrane. The alpha chain is a regulatory subunit. The chain is ATP synthase subunit alpha 2 from Burkholderia thailandensis (strain ATCC 700388 / DSM 13276 / CCUG 48851 / CIP 106301 / E264).